A 146-amino-acid chain; its full sequence is Hemoglobin subunit beta-1 (146 aa).

Positions 2–146 (HWTAEEKQLI…VSHSLARRYH (145 aa)) constitute a Globin domain. Residues His63 and His92 each coordinate heme b.

This sequence belongs to the globin family. As to quaternary structure, the major hemoglobin component (HbIII) is a tetramer of two alpha-2 chains and two beta-1 chains. In terms of tissue distribution, red blood cells.

Functionally, involved in oxygen transport from the lung to the various peripheral tissues. The chain is Hemoglobin subunit beta-1 (HBB1) from Varanus albigularis (White-throated monitor).